Here is a 573-residue protein sequence, read N- to C-terminus: Putative inorganic phosphate transporter C1683.01 (573 aa).

A run of 6 helical transmembrane segments spans residues 48–68 (MMLA…INLV), 100–120 (AASN…GDFF), 124–144 (FVYG…IAMP), 154–174 (MMWV…DYPM), 194–214 (LIFA…IILL), and 230–250 (LEGV…GVLI). The segment covering 261–270 (FKNSQQLNSG) has biased composition (polar residues). 2 disordered regions span residues 261-280 (FKNS…TSLN) and 290-312 (PSVT…RSNT). The next 6 helical transmembrane spans lie at 348–368 (HLLG…GVNL), 397–417 (LIIA…LVEI), 422–442 (WIQL…AGRW), 451–471 (FACF…TTFI), 487–507 (GISA…FNFL), and 510–530 (IIGY…GILF).

This sequence belongs to the major facilitator superfamily. Sugar transporter (TC 2.A.1.1) family.

The protein localises to the endoplasmic reticulum membrane. In terms of biological role, high-affinity transporter for external inorganic phosphate. The polypeptide is Putative inorganic phosphate transporter C1683.01 (Schizosaccharomyces pombe (strain 972 / ATCC 24843) (Fission yeast)).